A 187-amino-acid polypeptide reads, in one-letter code: Large ribosomal subunit protein uL22 (187 aa).

Composition is skewed to basic and acidic residues over residues 158 to 168 and 178 to 187; these read TKATDESEQAK and RQKEKMMRNE. Positions 158 to 187 are disordered; the sequence is TKATDESEQAKKKLSKKKLQRQKEKMMRNE.

Belongs to the universal ribosomal protein uL22 family.

The protein is Large ribosomal subunit protein uL22 (RpL17) of Anopheles gambiae (African malaria mosquito).